Reading from the N-terminus, the 343-residue chain is Serine/threonine-protein kinase SRK2C (343 aa).

The Protein kinase domain occupies 4 to 260 (YEIVKDIGSG…IEEIKNHSWF (257 aa)). Residues 10–18 (IGSGNFGVA) and lysine 33 each bind ATP. Catalysis depends on aspartate 123, which acts as the Proton acceptor. Threonine 158 bears the Phosphothreonine mark.

Belongs to the protein kinase superfamily. Ser/Thr protein kinase family. As to quaternary structure, interacts with I-2 and TOPP1. Expressed in seedlings.

The catalysed reaction is L-seryl-[protein] + ATP = O-phospho-L-seryl-[protein] + ADP + H(+). It catalyses the reaction L-threonyl-[protein] + ATP = O-phospho-L-threonyl-[protein] + ADP + H(+). Functionally, involved in gene regulation and confers tolerance to drought and osmotic stress. This chain is Serine/threonine-protein kinase SRK2C (SRK2C), found in Arabidopsis thaliana (Mouse-ear cress).